A 459-amino-acid chain; its full sequence is Trigger factor (459 aa).

The 80-residue stretch at 166–245 (GDFANIDLTA…VNSVKAEELP (80 aa)) folds into the PPIase FKBP-type domain.

The protein belongs to the FKBP-type PPIase family. Tig subfamily.

Its subcellular location is the cytoplasm. It carries out the reaction [protein]-peptidylproline (omega=180) = [protein]-peptidylproline (omega=0). Functionally, involved in protein export. Acts as a chaperone by maintaining the newly synthesized protein in an open conformation. Functions as a peptidyl-prolyl cis-trans isomerase. This is Trigger factor from Bifidobacterium longum (strain DJO10A).